Consider the following 172-residue polypeptide: Small ribosomal subunit protein bS6 (172 aa).

The disordered stretch occupies residues 100–172 (LPAKRVVKTS…ENKEIEKKED (73 aa)). Residues 107–172 (KTSEKNVKED…ENKEIEKKED (66 aa)) show a composition bias toward basic and acidic residues.

Belongs to the bacterial ribosomal protein bS6 family.

Its function is as follows. Binds together with bS18 to 16S ribosomal RNA. The sequence is that of Small ribosomal subunit protein bS6 from Prochlorococcus marinus (strain MIT 9211).